The sequence spans 923 residues: Probable dipeptidyl-aminopeptidase B (923 aa).

The segment covering 1–16 (MATEKGHGRDDEERVP) has biased composition (basic and acidic residues). The disordered stretch occupies residues 1 to 21 (MATEKGHGRDDEERVPLTRGS). The Cytoplasmic segment spans residues 1 to 99 (MATEKGHGRD…KPMHKSVKIA (99 aa)). The helical; Signal-anchor for type II membrane protein transmembrane segment at 100-120 (LWTLLFLSLGGWSLAFVLFIF) threads the bilayer. Over 121 to 923 (RSHDTYETPI…GLSYNFKHLH (803 aa)) the chain is Vacuolar. N-linked (GlcNAc...) asparagine glycosylation is found at Asn-135, Asn-351, and Asn-574. Ser-756 functions as the Charge relay system in the catalytic mechanism. N-linked (GlcNAc...) asparagine glycosylation occurs at Asn-815. Catalysis depends on charge relay system residues Asp-833 and His-866. The N-linked (GlcNAc...) asparagine glycan is linked to Asn-902.

This sequence belongs to the peptidase S9B family.

It is found in the vacuole membrane. The catalysed reaction is Release of an N-terminal dipeptide, Xaa-Yaa-|-Zaa-, from a polypeptide, preferentially when Yaa is Pro, provided Zaa is neither Pro nor hydroxyproline.. Functionally, type IV dipeptidyl-peptidase which removes N-terminal dipeptides sequentially from polypeptides having unsubstituted N-termini provided that the penultimate residue is proline. This is Probable dipeptidyl-aminopeptidase B (DAPB) from Ajellomyces capsulatus (strain G186AR / H82 / ATCC MYA-2454 / RMSCC 2432) (Darling's disease fungus).